The sequence spans 329 residues: Ribosomal RNA small subunit methyltransferase H (329 aa).

Residues 47-49 (GGH), Asp-67, Phe-93, Asp-115, and Gln-122 each bind S-adenosyl-L-methionine.

This sequence belongs to the methyltransferase superfamily. RsmH family.

The protein resides in the cytoplasm. The catalysed reaction is cytidine(1402) in 16S rRNA + S-adenosyl-L-methionine = N(4)-methylcytidine(1402) in 16S rRNA + S-adenosyl-L-homocysteine + H(+). In terms of biological role, specifically methylates the N4 position of cytidine in position 1402 (C1402) of 16S rRNA. This chain is Ribosomal RNA small subunit methyltransferase H, found in Blochmanniella pennsylvanica (strain BPEN).